The primary structure comprises 245 residues: tRNA1(Val) (adenine(37)-N6)-methyltransferase (245 aa).

The protein belongs to the methyltransferase superfamily. tRNA (adenine-N(6)-)-methyltransferase family.

The protein localises to the cytoplasm. It catalyses the reaction adenosine(37) in tRNA1(Val) + S-adenosyl-L-methionine = N(6)-methyladenosine(37) in tRNA1(Val) + S-adenosyl-L-homocysteine + H(+). In terms of biological role, specifically methylates the adenine in position 37 of tRNA(1)(Val) (anticodon cmo5UAC). This Escherichia coli O157:H7 (strain EC4115 / EHEC) protein is tRNA1(Val) (adenine(37)-N6)-methyltransferase.